Consider the following 631-residue polypeptide: Pro-interleukin-16 (631 aa).

2 disordered regions span residues 30–269 and 317–344; these read ENPG…FPLT and PKEG…ASDT. Positions 132–144 are enriched in low complexity; that stretch reads SSSSSSIKQRISS. S221 carries the post-translational modification Phosphoserine. Residues 322-344 show a composition bias toward polar residues; sequence SPTSSSNEDSAANGSAETSASDT. The interaction with PPP1R12A, PPP1R12B and PPP1R12C stretch occupies residues 405–501; that stretch reads KQLDSIHVTI…IVTRKLTAES (97 aa). PDZ domains lie at 411 to 496 and 533 to 618; these read HVTI…VTRK and TVTL…IRRK.

In terms of assembly, homotetramer. Pro-interleukin-16 interacts (via PDZ 2 domain) with PPP1R12A, PPP1R12B and PPP1R12C. Pro-interleukin-16 interacts with GRIN2A. Pro-interleukin-16 interacts with GABPB1. Pro-interleukin-16 interacts (via PDZ 3 domain) with HDAC3.

It localises to the secreted. The protein localises to the cytoplasm. It is found in the nucleus. Interleukin-16 stimulates a migratory response in CD4+ lymphocytes, monocytes, and eosinophils. Primes CD4+ T-cells for IL-2 and IL-15 responsiveness. Also induces T-lymphocyte expression of interleukin 2 receptor. Ligand for CD4. In terms of biological role, pro-interleukin-16 is involved in cell cycle progression in T-cells. Appears to be involved in transcriptional regulation of SKP2 and is probably part of a transcriptional repression complex on the core promoter of the SKP2 gene. May act as a scaffold for GABPB1 (the DNA-binding subunit the GABP transcription factor complex) and HDAC3 thus maintaining transcriptional repression and blocking cell cycle progression in resting T-cells. This is Pro-interleukin-16 (IL16) from Chlorocebus aethiops (Green monkey).